Here is a 351-residue protein sequence, read N- to C-terminus: sn-glycerol-3-phosphate import ATP-binding protein UgpC (351 aa).

The region spanning isoleucine 4–isoleucine 234 is the ABC transporter domain. Glycine 36–serine 43 contributes to the ATP binding site.

This sequence belongs to the ABC transporter superfamily. sn-glycerol-3-phosphate importer (TC 3.A.1.1.3) family. The complex is composed of two ATP-binding proteins (UgpC), two transmembrane proteins (UgpA and UgpE) and a solute-binding protein (UgpB).

The protein resides in the cell inner membrane. It carries out the reaction sn-glycerol 3-phosphate(out) + ATP + H2O = sn-glycerol 3-phosphate(in) + ADP + phosphate + H(+). Its function is as follows. Part of the ABC transporter complex UgpBAEC involved in sn-glycerol-3-phosphate (G3P) import. Responsible for energy coupling to the transport system. This chain is sn-glycerol-3-phosphate import ATP-binding protein UgpC, found in Ruegeria sp. (strain TM1040) (Silicibacter sp.).